A 307-amino-acid polypeptide reads, in one-letter code: MSKKLKAAIIGPGNIGTDLVMKMLRSEWIEPVWMVGIDPESDGLKRARRFGLKTTAEGVDGLLPHVLEDDIRIAFDATSAYVHAENSRKLNEWGVLMVDLTPAAIGRYCVLRVNIKQNVGKLEMNVNMVTCGGQATSPMVAGVSRVQPVGYGKIVAKVFSRSIGPGTRKNIEEFNRTNAGAIEKVGGGKEGNAIIVLNTAHASFMICYTIHFFIKTEPDENPIIPSVHPIIAELQNYFPGYRLKNRPLFYRNPFSIFIEFEPLADYLXNYPGNLDIMTPPALPTLDIFPDKIAIATIQLPCLEPHLP.

Catalysis depends on C131, which acts as the Acyl-thioester intermediate. NAD(+) contacts are provided by residues 162-170 (SIGPGTRKN) and N273.

Belongs to the acetaldehyde dehydrogenase family.

The catalysed reaction is acetaldehyde + NAD(+) + CoA = acetyl-CoA + NADH + H(+). The sequence is that of Acetaldehyde dehydrogenase 1 (salG) from Metapseudomonas furukawaii (Pseudomonas furukawaii).